The primary structure comprises 162 residues: Nucleotide-binding protein Franean1_6074 (162 aa).

It belongs to the YajQ family.

Its function is as follows. Nucleotide-binding protein. The protein is Nucleotide-binding protein Franean1_6074 of Parafrankia sp. (strain EAN1pec).